Consider the following 936-residue polypeptide: Protein NLP2 (936 aa).

The segment at 99–130 (IMSVNPTEAEKTGKSSGELGSDDGAHQGSSMV) is disordered. One can recognise an RWP-RK domain in the interval 550 to 635 (QPSSIGHAEK…INSVHGVDRS (86 aa)). 3 disordered regions span residues 666–697 (PSVG…SCQL), 753–782 (CTNP…IQQE), and 794–827 (DKDH…RSAL). A compositionally biased stretch (basic and acidic residues) spans 671–682 (TVEENSDLKSEE). Polar residues predominate over residues 688 to 697 (DGSQRQSCQL). Residues 754–769 (TNPSSSLRPSSESTRN) show a composition bias toward low complexity. Over residues 770-781 (QIVGRNSPSIQQ) the composition is skewed to polar residues. Low complexity predominate over residues 801 to 815 (STSGMTDSSSGSASS). Over residues 816 to 825 (HPTFKQNTRS) the composition is skewed to polar residues. One can recognise a PB1 domain in the interval 834-916 (ALTVKATYNG…RIVKLQVRDL (83 aa)).

The protein resides in the nucleus. Its function is as follows. Probable transcription factor. This Oryza sativa subsp. japonica (Rice) protein is Protein NLP2.